We begin with the raw amino-acid sequence, 159 residues long: Ribosome maturation factor RimP (159 aa).

It belongs to the RimP family.

It localises to the cytoplasm. Its function is as follows. Required for maturation of 30S ribosomal subunits. This is Ribosome maturation factor RimP from Halothermothrix orenii (strain H 168 / OCM 544 / DSM 9562).